The primary structure comprises 276 residues: 2-dehydro-3-deoxyphosphooctonate aldolase (276 aa).

This sequence belongs to the KdsA family.

Its subcellular location is the cytoplasm. It catalyses the reaction D-arabinose 5-phosphate + phosphoenolpyruvate + H2O = 3-deoxy-alpha-D-manno-2-octulosonate-8-phosphate + phosphate. Its pathway is carbohydrate biosynthesis; 3-deoxy-D-manno-octulosonate biosynthesis; 3-deoxy-D-manno-octulosonate from D-ribulose 5-phosphate: step 2/3. It participates in bacterial outer membrane biogenesis; lipopolysaccharide biosynthesis. The sequence is that of 2-dehydro-3-deoxyphosphooctonate aldolase from Helicobacter pylori (strain Shi470).